The chain runs to 155 residues: FHA domain-containing protein FhaB (155 aa).

A helical membrane pass occupies residues Leu-6 to Leu-28. Thr-36 carries the phosphothreonine modification. An FHA domain is found at Val-83–Val-132.

Phosphorylated by PknB. Dephosphorylated by PstP.

Its subcellular location is the cell membrane. This chain is FHA domain-containing protein FhaB (fhaB), found in Mycobacterium tuberculosis (strain CDC 1551 / Oshkosh).